The primary structure comprises 123 residues: Small ribosomal subunit protein uS13 (123 aa).

The disordered stretch occupies residues 93-123 (HRKGLPVRGQNTKNNARTRKGPAKAIAGKKK). Positions 108 to 123 (ARTRKGPAKAIAGKKK) are enriched in basic residues.

Belongs to the universal ribosomal protein uS13 family. In terms of assembly, part of the 30S ribosomal subunit. Forms a loose heterodimer with protein S19. Forms two bridges to the 50S subunit in the 70S ribosome.

In terms of biological role, located at the top of the head of the 30S subunit, it contacts several helices of the 16S rRNA. In the 70S ribosome it contacts the 23S rRNA (bridge B1a) and protein L5 of the 50S subunit (bridge B1b), connecting the 2 subunits; these bridges are implicated in subunit movement. Contacts the tRNAs in the A and P-sites. The chain is Small ribosomal subunit protein uS13 from Leuconostoc mesenteroides subsp. mesenteroides (strain ATCC 8293 / DSM 20343 / BCRC 11652 / CCM 1803 / JCM 6124 / NCDO 523 / NBRC 100496 / NCIMB 8023 / NCTC 12954 / NRRL B-1118 / 37Y).